Reading from the N-terminus, the 261-residue chain is Global transcriptional regulator CodY (261 aa).

A GAF domain region spans residues 1–159 (MANLLSKTRR…SSTVVGIQLL (159 aa)). Residues 207–226 (ASVIADRIGITRSVIVNALR) constitute a DNA-binding region (H-T-H motif).

The protein belongs to the CodY family.

The protein resides in the cytoplasm. DNA-binding global transcriptional regulator which is involved in the adaptive response to starvation and acts by directly or indirectly controlling the expression of numerous genes in response to nutrient availability. During rapid exponential growth, CodY is highly active and represses genes whose products allow adaptation to nutrient depletion. This is Global transcriptional regulator CodY from Streptococcus mutans serotype c (strain ATCC 700610 / UA159).